The primary structure comprises 323 residues: AA9 family lytic polysaccharide monooxygenase B (323 aa).

The signal sequence occupies residues 1–18; the sequence is MKSFTLTTLAALAGNAAA. Residues histidine 19 and histidine 97 each contribute to the Cu(2+) site. Cysteine 56 and cysteine 191 form a disulfide bridge. Positions 177 and 186 each coordinate O2. Tyrosine 188 is a binding site for Cu(2+). The CBM1 domain occupies 286–323; the sequence is CTVQKYQQCGGQGYTGCTNCASGSTCSAVSPPYYSQCV.

This sequence belongs to the polysaccharide monooxygenase AA9 family. It depends on Cu(2+) as a cofactor.

The protein localises to the secreted. It catalyses the reaction [(1-&gt;4)-beta-D-glucosyl]n+m + reduced acceptor + O2 = 4-dehydro-beta-D-glucosyl-[(1-&gt;4)-beta-D-glucosyl]n-1 + [(1-&gt;4)-beta-D-glucosyl]m + acceptor + H2O.. Its activity is regulated as follows. Is able to utilize various natural phenolic compounds as reducing agents. Most of these reducing agents are present in plants, either free or as lignin building blocks, such as sinapic acid, or as flavonoids such as catechin and dopamine. Phenolic compounds with 1,2-benzenediol and 1,2,3-benzenetriol moieties yield the highest release of oxidized and non-oxidized glucooligosaccharides from cellulose compared to monophenols or sulfur-containing compounds. Its function is as follows. Lytic polysaccharide monooxygenase (LPMO) that depolymerizes crystalline and amorphous polysaccharides via the oxidation of scissile alpha- or beta-(1-4)-glycosidic bonds, yielding C1 oxidation products. Catalysis by LPMOs requires the reduction of the active-site copper from Cu(II) to Cu(I) by a reducing agent and H(2)O(2) or O(2) as a cosubstrate. Is active on regenerated amorphous cellulose (RAC). The polypeptide is AA9 family lytic polysaccharide monooxygenase B (Thermothelomyces thermophilus (strain ATCC 42464 / BCRC 31852 / DSM 1799) (Sporotrichum thermophile)).